Here is a 184-residue protein sequence, read N- to C-terminus: UPF0316 protein BPUM_0594 (184 aa).

3 helical membrane passes run 9 to 29 (AFTMVLIILVINIVYVSFSTM), 41 to 61 (AAAFAGTIEMLIYVIGLSIVL), and 67 to 87 (IQNVIAYALGYGMGIIVGMKI).

It belongs to the UPF0316 family.

The protein localises to the cell membrane. In Bacillus pumilus (strain SAFR-032), this protein is UPF0316 protein BPUM_0594.